Here is a 482-residue protein sequence, read N- to C-terminus: Uric acid transporter UacT (482 aa).

The Cytoplasmic segment spans residues 1 to 29; the sequence is MSAIDSQLPSSSGQDRPTDEVDRILSPGK. The helical transmembrane segment at 30–50 threads the bilayer; the sequence is LIILGLQHVLVMYAGAVAVPL. Topologically, residues 51-62 are periplasmic; the sequence is MIGDRLGLSKEA. The chain crosses the membrane as a helical span at residues 63–83; that stretch reads IAMLISSDLFCCGIVTLLQCI. Residues 84–92 are Cytoplasmic-facing; that stretch reads GIGRFMGIR. A helical transmembrane segment spans residues 93–113; that stretch reads LPVIMSVTFAAVTPMIAIGMN. The Periplasmic segment spans residues 114 to 115; the sequence is PD. Residues 116–136 traverse the membrane as a helical segment; the sequence is IGLLGIFGATIAAGFITTLLA. The Cytoplasmic portion of the chain corresponds to 137–142; that stretch reads PLIGRL. The chain crosses the membrane as a helical span at residues 143-163; sequence MPLFPPLVTGVVITSIGLSII. At 164–178 the chain is on the periplasmic side; the sequence is QVGIDWAAGGKGNPQ. Residues 179-199 traverse the membrane as a helical segment; sequence YGNPVYLGISFAVLIFILLIT. The Cytoplasmic portion of the chain corresponds to 200 to 204; sequence RYAKG. The chain crosses the membrane as a helical span at residues 205–225; that stretch reads FMSNVAVLLGIVFGFLLSWMM. Over 226–261 the chain is Periplasmic; it reads NEVNLSGLHDASWFAIVTPMSFGMPIFDPVSILTMT. Residues 262-282 form a helical membrane-spanning segment; sequence AVLIIVFIESMGMFLALGEIV. Topologically, residues 283–337 are cytoplasmic; sequence GRKLSSHDIIRGLRVDGVGTMIGGTFNSFPHTSFSQNVGLVSVTRVHSRWVCISS. A helical membrane pass occupies residues 338-358; sequence GIILILFGMVPKMAVLVASIP. Gln359 is a topological domain (periplasmic). The helical transmembrane segment at 360 to 380 threads the bilayer; the sequence is FVLGGAGLVMFGMVLATGIRI. The Cytoplasmic portion of the chain corresponds to 381–392; the sequence is LSRCNYTTNRYN. The helical transmembrane segment at 393–413 threads the bilayer; sequence LYIVAISLGVGMTPTLSHDFF. The Periplasmic portion of the chain corresponds to 414–421; that stretch reads SKLPAVLQ. The chain crosses the membrane as a helical span at residues 422–442; sequence PLLHSGIMLATLSAVVLNVFF. The Cytoplasmic portion of the chain corresponds to 443-482; that stretch reads NGYQHHADLVKESVSDKDLKVRTVRMWLLMRKLKKNEHGE.

This sequence belongs to the nucleobase:cation symporter-2 (NCS2) (TC 2.A.40) family.

The protein localises to the cell inner membrane. Its activity is regulated as follows. Inhibited in the presence of the protonophore carbonyl cyanide m-chlorophenyl hydrazone. Its function is as follows. Proton-dependent high-capacity transporter for uric acid. Also shows a low capacity for transport of xanthine at 37 degrees Celsius but not at 25 degrees Celsius. The chain is Uric acid transporter UacT (uacT) from Escherichia coli (strain K12).